A 308-amino-acid chain; its full sequence is Ferredoxin--NADP reductase (308 aa).

Positions 26, 34, 39, 77, 106, 266, and 306 each coordinate FAD.

It belongs to the ferredoxin--NADP reductase type 2 family. Homodimer. It depends on FAD as a cofactor.

The catalysed reaction is 2 reduced [2Fe-2S]-[ferredoxin] + NADP(+) + H(+) = 2 oxidized [2Fe-2S]-[ferredoxin] + NADPH. The sequence is that of Ferredoxin--NADP reductase from Lactobacillus delbrueckii subsp. bulgaricus (strain ATCC 11842 / DSM 20081 / BCRC 10696 / JCM 1002 / NBRC 13953 / NCIMB 11778 / NCTC 12712 / WDCM 00102 / Lb 14).